Consider the following 600-residue polypeptide: Elongation factor 4 (600 aa).

Residues 5 to 187 (KYIRNFSIIA…AIVNKLPPPK (183 aa)) form the tr-type G domain. GTP contacts are provided by residues 17-22 (DHGKST) and 134-137 (NKID).

The protein belongs to the TRAFAC class translation factor GTPase superfamily. Classic translation factor GTPase family. LepA subfamily.

The protein localises to the cell inner membrane. The catalysed reaction is GTP + H2O = GDP + phosphate + H(+). Required for accurate and efficient protein synthesis under certain stress conditions. May act as a fidelity factor of the translation reaction, by catalyzing a one-codon backward translocation of tRNAs on improperly translocated ribosomes. Back-translocation proceeds from a post-translocation (POST) complex to a pre-translocation (PRE) complex, thus giving elongation factor G a second chance to translocate the tRNAs correctly. Binds to ribosomes in a GTP-dependent manner. The polypeptide is Elongation factor 4 (Rickettsia canadensis (strain McKiel)).